A 113-amino-acid chain; its full sequence is Small ribosomal subunit protein bS6 (113 aa).

The protein belongs to the bacterial ribosomal protein bS6 family.

Binds together with bS18 to 16S ribosomal RNA. This chain is Small ribosomal subunit protein bS6, found in Vesicomyosocius okutanii subsp. Calyptogena okutanii (strain HA).